The sequence spans 387 residues: Ferrochelatase (387 aa).

2 residues coordinate Fe cation: histidine 196 and glutamate 277.

It belongs to the ferrochelatase family.

The protein resides in the cytoplasm. It catalyses the reaction heme b + 2 H(+) = protoporphyrin IX + Fe(2+). It participates in porphyrin-containing compound metabolism; protoheme biosynthesis; protoheme from protoporphyrin-IX: step 1/1. Functionally, catalyzes the ferrous insertion into protoporphyrin IX. The protein is Ferrochelatase of Synechococcus sp. (strain RCC307).